The sequence spans 248 residues: Glucosamine-6-phosphate isomerase (248 aa).

The Proton acceptor; for enolization step role is filled by Asp-68. The active-site For ring-opening step is the Glu-137. His-139 functions as the Proton acceptor; for ring-opening step in the catalytic mechanism. Residue Glu-144 is the For ring-opening step of the active site.

The protein belongs to the glucosamine/galactosamine-6-phosphate isomerase family. As to quaternary structure, monomer.

The catalysed reaction is alpha-D-glucosamine 6-phosphate + H2O = beta-D-fructose 6-phosphate + NH4(+). The polypeptide is Glucosamine-6-phosphate isomerase (NAG1) (Candida albicans (strain SC5314 / ATCC MYA-2876) (Yeast)).